Here is a 671-residue protein sequence, read N- to C-terminus: Receptor-interacting serine/threonine-protein kinase 1 (671 aa).

The residue at position 6 (serine 6) is a Phosphoserine; by IKKA and IKKB. One can recognise a Protein kinase domain in the interval 17 to 289 (FLESAELDSG…GIEEKFRPFY (273 aa)). Residue serine 20 is modified to Phosphoserine; by autocatalysis. ATP contacts are provided by residues 23 to 31 (LDSGGFGKV) and lysine 45. Serine 25 bears the Phosphoserine; by IKKA and IKKB mark. Catalysis depends on aspartate 138, which acts as the Proton acceptor. Residue serine 161 is modified to Phosphoserine; by RIPK3 and autocatalysis. Serine 166 is subject to Phosphoserine; by autocatalysis. The segment at 290-582 (LSQLEESVEE…QAIFDNTTSL (293 aa)) is interaction with SQSTM1. Serine 303 carries the phosphoserine modification. Phosphoserine; by MAP3K7 is present on residues serine 320, serine 331, and serine 333. Positions 331–348 (SRSNSATEQPGSLHSSQG) are enriched in polar residues. Positions 331-354 (SRSNSATEQPGSLHSSQGLGMGPV) are disordered. Residue lysine 377 forms a Glycyl lysine isopeptide (Lys-Gly) (interchain with G-Cter in ubiquitin) linkage. Tyrosine 384 carries the post-translational modification Phosphotyrosine. Residues 389–455 (SRMDRQTKQQ…GNAVHQPSGL (67 aa)) are disordered. Residues 428–444 (NFQNTEGKGTAYSSAAS) show a composition bias toward polar residues. The short motif at 531-547 (YTIYNSTGIQIGAYNYM) is the RIP homotypic interaction motif (RHIM) element. The region spanning 583–669 (TDKHLDPIRE…DLLSSLIYVS (87 aa)) is the Death domain. Arginine 603 is a glycosylation site ((Microbial infection) N-beta-linked (GlcNAc) arginine).

This sequence belongs to the protein kinase superfamily. TKL Ser/Thr protein kinase family. As to quaternary structure, homodimer. Interacts (via RIP homotypic interaction motif) with RIPK3 (via RIP homotypic interaction motif); this interaction induces RIPK1 phosphorylation and formation of a RIPK1-RIPK3 necroptosis-inducing complex. Upon TNF-induced necrosis, the RIPK1-RIPK3 dimer further interacts with PGAM5 and MLKL; the formation of this complex leads to PGAM5 phosphorylation and increase in PGAM5 phosphatase activity. Interacts (via the death domain) with TNFRSF6 (via the death domain) and TRADD (via the death domain). Is recruited by TRADD to TNFRSF1A in a TNF-dependent process. Binds RNF216, EGFR, IKBKG, TRAF1, TRAF2 and TRAF3. Interacts with BNLF1. Interacts with SQSTM1 upon TNF-alpha stimulation. May interact with MAVS/IPS1. Interacts with ZFAND5. Interacts with RBCK1. Interacts with ZBP1. Interacts with BIRC2/c-IAP1, BIRC3/c-IAP2 and XIAP/BIRC4. Interacts (via kinase domain) with DAB2IP (via Ras-GAP domain); the interaction occurs in a TNF-alpha-dependent manner. Interacts with ARHGEF2. Interacts (via protein kinase domain) with RFFL; involved in RIPK1 ubiquitination. Interacts with RNF34; involved in RIPK1 ubiquitination. Interacts with TICAM1 and this interaction is enhanced in the presence of WDFY1. Interacts with PELI1. Interacts (via death domain) with CRADD (via death domain); the interaction is direct. Component of complex IIa composed of at least RIPK1, FADD and CASP8. Component of the AIM2 PANoptosome complex, a multiprotein complex that drives inflammatory cell death (PANoptosis). Interacts with MAP3K7, CFLAR, CASP8, FADD and NEMO. Interacts with TAX1BP1; this interaction negatively regulates RIPK1 ubiquitination. Interacts with GRB2. Interacts with DDX24; this interaction disrupts RLR signaling activation of IFN-dependent transcription factor IRF7. (Microbial infection) Interacts with mumps virus protein SH; this interaction inhibits downstream NF-kappa-B pathway activation. In terms of assembly, (Microbial infection) Interacts with Murid herpesvirus 1 protein RIR1. As to quaternary structure, (Microbial infection) Interacts (via RIP homotypic interaction motif) with herpes simplex virus 1/HHV-1 protein RIR1/ICP6 (via RIP homotypic interaction motif); this interaction prevents necroptosis activation. (Microbial infection) Interacts (via RIP homotypic interaction motif) with herpes simplex virus 2/HHV-2 protein RIR1/ICP10 (via RIP homotypic interaction motif); this interaction prevents necroptosis activation. (Microbial infection) Proteolytically cleaved by S.flexneri OspD3 within the RIP homotypic interaction motif (RHIM), leading to its degradation and inhibition of necroptosis. Post-translationally, proteolytically cleaved by CASP8 at Asp-324. Cleavage is crucial for limiting TNF-induced apoptosis, necroptosis and inflammatory response. Cleavage abolishes NF-kappa-B activation and enhances the interaction of TRADD with FADD. Proteolytically cleaved by CASP6 during intrinsic apoptosis. In terms of processing, RIPK1 and RIPK3 undergo reciprocal auto- and trans-phosphorylation. Phosphorylation of Ser-161 by RIPK3 is necessary for the formation of the necroptosis-inducing complex. Phosphorylation at Ser-25 represses its kinase activity and consequently prevents TNF-mediated RIPK1-dependent cell death. Phosphorylated at Ser-320 by MAP3K7 which requires prior ubiquitination with 'Lys-63'-linked chains by BIRC2/c-IAP1 and BIRC3/c-IAP2. This phosphorylation positively regulates RIPK1 interaction with RIPK3 to promote necroptosis but negatively regulates RIPK1 kinase activity and its interaction with FADD to mediate apoptosis. Deubiquitinated by USP7; this modification is required for TNF-alpha-induced apoptosis. Post-translationally, ubiquitinated with 'Lys-11'-, 'Lys-48'-, 'Lys-63'- and linear-linked type ubiquitin. Polyubiquitination with 'Lys-63'-linked chains by TRAF2 induces association with the IKK complex. Deubiquitination of 'Lys-63'-linked chains and polyubiquitination with 'Lys-48'-linked chains by TNFAIP3 leads to RIPK1 proteasomal degradation and consequently down-regulates TNF-alpha-induced NF-kappa-B signaling. 'Lys-48'-linked polyubiquitination by RFFL or RNF34 also promotes proteasomal degradation and negatively regulates TNF-alpha-induced NF-kappa-B signaling. Linear polyubiquitinated; the head-to-tail linear polyubiquitination ('Met-1'-linked) is mediated by the LUBAC complex and decreases protein kinase activity. Deubiquitination of linear polyubiquitin by CYLD promotes the kinase activity. Polyubiquitinated with 'Lys-48' and 'Lys-63'-linked chains by BIRC2/c-IAP1 and BIRC3/c-IAP2, leading to activation of NF-kappa-B. Ubiquitinated with 'Lys-63'-linked chains by PELI1. Ubiquitination at Lys-377 with 'Lys-63'-linked chains by BIRC2/c-IAP1 and BIRC3/c-IAP2 is essential for its phosphorylation at Ser-320 mediated by MAP3K7. This ubiquitination is required for NF-kB activation, suppresses RIPK1 kinase activity and plays a critical role in preventing cell death during embryonic development. In terms of processing, (Microbial infection) Glycosylated at Arg-603 by enteropathogenic E.coli protein NleB1: arginine GlcNAcylation prevents homotypic/heterotypic death domain interactions.

Its subcellular location is the cytoplasm. The protein resides in the cell membrane. The catalysed reaction is L-seryl-[protein] + ATP = O-phospho-L-seryl-[protein] + ADP + H(+). It carries out the reaction L-threonyl-[protein] + ATP = O-phospho-L-threonyl-[protein] + ADP + H(+). With respect to regulation, serine-threonine kinase activity is inhibited by linear polyubiquitination ('Met-1'-linked) by the LUBAC complex. Inhibited by necrostatins, including necrostatin-1, necrostatin-3 and necrostatin-4. In terms of biological role, serine-threonine kinase which is a key regulator of TNF-mediated apoptosis, necroptosis and inflammatory pathways. Exhibits kinase activity-dependent functions that regulate cell death and kinase-independent scaffold functions regulating inflammatory signaling and cell survival. Has kinase-independent scaffold functions: upon binding of TNF to TNFR1, RIPK1 is recruited to the TNF-R1 signaling complex (TNF-RSC also known as complex I) where it acts as a scaffold protein promoting cell survival, in part, by activating the canonical NF-kappa-B pathway. Kinase activity is essential to regulate necroptosis and apoptosis, two parallel forms of cell death: upon activation of its protein kinase activity, regulates assembly of two death-inducing complexes, namely complex IIa (RIPK1-FADD-CASP8), which drives apoptosis, and the complex IIb (RIPK1-RIPK3-MLKL), which drives necroptosis. RIPK1 is required to limit CASP8-dependent TNFR1-induced apoptosis. In normal conditions, RIPK1 acts as an inhibitor of RIPK3-dependent necroptosis, a process mediated by RIPK3 component of complex IIb, which catalyzes phosphorylation of MLKL upon induction by ZBP1. Inhibits RIPK3-mediated necroptosis via FADD-mediated recruitment of CASP8, which cleaves RIPK1 and limits TNF-induced necroptosis. Required to inhibit apoptosis and necroptosis during embryonic development: acts by preventing the interaction of TRADD with FADD thereby limiting aberrant activation of CASP8. In addition to apoptosis and necroptosis, also involved in inflammatory response by promoting transcriptional production of pro-inflammatory cytokines, such as interleukin-6 (IL6). Phosphorylates RIPK3: RIPK1 and RIPK3 undergo reciprocal auto- and trans-phosphorylation. Phosphorylates DAB2IP at 'Ser-728' in a TNF-alpha-dependent manner, and thereby activates the MAP3K5-JNK apoptotic cascade. Required for ZBP1-induced NF-kappa-B activation in response to DNA damage. The chain is Receptor-interacting serine/threonine-protein kinase 1 from Homo sapiens (Human).